Here is a 211-residue protein sequence, read N- to C-terminus: Shikimate kinase (211 aa).

The segment at 1-22 (MHFRYNYRMQRSKTPNTKNSDT) is disordered. Over residues 12–22 (SKTPNTKNSDT) the composition is skewed to polar residues. An ATP-binding site is contributed by 36-41 (GSGKTT). Residue T40 coordinates Mg(2+). Positions 58, 82, and 104 each coordinate substrate. R142 is a binding site for ATP. R161 serves as a coordination point for substrate. Residue Q178 participates in ATP binding.

It belongs to the shikimate kinase family. As to quaternary structure, monomer. The cofactor is Mg(2+).

The protein localises to the cytoplasm. The catalysed reaction is shikimate + ATP = 3-phosphoshikimate + ADP + H(+). The protein operates within metabolic intermediate biosynthesis; chorismate biosynthesis; chorismate from D-erythrose 4-phosphate and phosphoenolpyruvate: step 5/7. Functionally, catalyzes the specific phosphorylation of the 3-hydroxyl group of shikimic acid using ATP as a cosubstrate. The protein is Shikimate kinase of Nitrosomonas europaea (strain ATCC 19718 / CIP 103999 / KCTC 2705 / NBRC 14298).